We begin with the raw amino-acid sequence, 428 residues long: RF4 protein (428 aa).

Asn8, Asn205, and Asn344 each carry an N-linked (GlcNAc...) asparagine glycan.

Not known. The chain is RF4 protein (RF4) from Kluyveromyces lactis (strain ATCC 8585 / CBS 2359 / DSM 70799 / NBRC 1267 / NRRL Y-1140 / WM37) (Yeast).